The sequence spans 370 residues: Histidinol-phosphate aminotransferase (370 aa).

The residue at position 231 (K231) is an N6-(pyridoxal phosphate)lysine.

The protein belongs to the class-II pyridoxal-phosphate-dependent aminotransferase family. Histidinol-phosphate aminotransferase subfamily. As to quaternary structure, homodimer. The cofactor is pyridoxal 5'-phosphate.

The catalysed reaction is L-histidinol phosphate + 2-oxoglutarate = 3-(imidazol-4-yl)-2-oxopropyl phosphate + L-glutamate. It participates in amino-acid biosynthesis; L-histidine biosynthesis; L-histidine from 5-phospho-alpha-D-ribose 1-diphosphate: step 7/9. The protein is Histidinol-phosphate aminotransferase of Paracidovorax citrulli (strain AAC00-1) (Acidovorax citrulli).